The following is a 145-amino-acid chain: Secreted RxLR effector protein 43 (145 aa).

The signal sequence occupies residues 1–20 (MKVTMALAALCVALQAPCIG). The RxLR signature appears at 31–34 (RHLR).

The protein belongs to the RxLR effector family.

It is found in the secreted. The protein localises to the host nucleus. It localises to the host cytoplasm. Functionally, secreted effector that completely suppresses the host cell death induced by cell death-inducing proteins. In Plasmopara viticola (Downy mildew of grapevine), this protein is Secreted RxLR effector protein 43.